A 421-amino-acid chain; its full sequence is UDP-N-acetylglucosamine 1-carboxyvinyltransferase (421 aa).

Phosphoenolpyruvate is bound at residue 22 to 23; sequence KN. Arg93 contributes to the UDP-N-acetyl-alpha-D-glucosamine binding site. Catalysis depends on Cys117, which acts as the Proton donor. The residue at position 117 (Cys117) is a 2-(S-cysteinyl)pyruvic acid O-phosphothioketal. UDP-N-acetyl-alpha-D-glucosamine-binding positions include 122-126, Asp308, and Ile330; that span reads RPVDL.

The protein belongs to the EPSP synthase family. MurA subfamily.

Its subcellular location is the cytoplasm. The catalysed reaction is phosphoenolpyruvate + UDP-N-acetyl-alpha-D-glucosamine = UDP-N-acetyl-3-O-(1-carboxyvinyl)-alpha-D-glucosamine + phosphate. It participates in cell wall biogenesis; peptidoglycan biosynthesis. In terms of biological role, cell wall formation. Adds enolpyruvyl to UDP-N-acetylglucosamine. The polypeptide is UDP-N-acetylglucosamine 1-carboxyvinyltransferase (Pseudomonas putida (strain W619)).